We begin with the raw amino-acid sequence, 714 residues long: Polyribonucleotide nucleotidyltransferase (714 aa).

Residues D496 and D502 each coordinate Mg(2+). Residues 562 to 621 enclose the KH domain; sequence PRLLTIKIDPDLIGMVIGPGGKTIKGITEQTRAKVDIADDGTVTIASSESENAEKAKRLI. The S1 motif domain maps to 631–699; sequence GDVYFGKVTR…NKGRINLTRL (69 aa).

This sequence belongs to the polyribonucleotide nucleotidyltransferase family. The cofactor is Mg(2+).

The protein localises to the cytoplasm. It catalyses the reaction RNA(n+1) + phosphate = RNA(n) + a ribonucleoside 5'-diphosphate. Involved in mRNA degradation. Catalyzes the phosphorolysis of single-stranded polyribonucleotides processively in the 3'- to 5'-direction. The sequence is that of Polyribonucleotide nucleotidyltransferase from Picosynechococcus sp. (strain ATCC 27264 / PCC 7002 / PR-6) (Agmenellum quadruplicatum).